A 112-amino-acid polypeptide reads, in one-letter code: Phosphoribosyl-AMP cyclohydrolase (112 aa).

Asp-76 is a Mg(2+) binding site. Cys-77 provides a ligand contact to Zn(2+). Mg(2+) contacts are provided by Asp-78 and Asp-80. Cys-93 and Cys-100 together coordinate Zn(2+).

The protein belongs to the PRA-CH family. In terms of assembly, homodimer. Requires Mg(2+) as cofactor. The cofactor is Zn(2+).

Its subcellular location is the cytoplasm. The enzyme catalyses 1-(5-phospho-beta-D-ribosyl)-5'-AMP + H2O = 1-(5-phospho-beta-D-ribosyl)-5-[(5-phospho-beta-D-ribosylamino)methylideneamino]imidazole-4-carboxamide. It participates in amino-acid biosynthesis; L-histidine biosynthesis; L-histidine from 5-phospho-alpha-D-ribose 1-diphosphate: step 3/9. Catalyzes the hydrolysis of the adenine ring of phosphoribosyl-AMP. The chain is Phosphoribosyl-AMP cyclohydrolase from Streptococcus thermophilus (strain ATCC BAA-491 / LMD-9).